A 136-amino-acid polypeptide reads, in one-letter code: Large ribosomal subunit protein uL16 (136 aa).

This sequence belongs to the universal ribosomal protein uL16 family. Part of the 50S ribosomal subunit.

Its function is as follows. Binds 23S rRNA and is also seen to make contacts with the A and possibly P site tRNAs. The protein is Large ribosomal subunit protein uL16 of Rickettsia prowazekii (strain Madrid E).